We begin with the raw amino-acid sequence, 537 residues long: Phosphoenolpyruvate carboxykinase (ATP) (537 aa).

Positions 61, 195, and 201 each coordinate substrate. ATP contacts are provided by residues K201, H220, and 236-244; that span reads GLSGTGKTT. Mn(2+)-binding residues include K201 and H220. D257 serves as a coordination point for Mn(2+). An ATP-binding site is contributed by E285. Over residues 311 to 321 the composition is skewed to basic and acidic residues; sequence PDFDNGSKTEN. Residues 311–342 are disordered; it reads PDFDNGSKTENTRSAYPLESIPNASPTGRAGQ. R323 contacts substrate. ATP is bound by residues R323 and T448.

It belongs to the phosphoenolpyruvate carboxykinase (ATP) family. Requires Mn(2+) as cofactor.

It localises to the cytoplasm. It catalyses the reaction oxaloacetate + ATP = phosphoenolpyruvate + ADP + CO2. It functions in the pathway carbohydrate biosynthesis; gluconeogenesis. In terms of biological role, involved in the gluconeogenesis. Catalyzes the conversion of oxaloacetate (OAA) to phosphoenolpyruvate (PEP) through direct phosphoryl transfer between the nucleoside triphosphate and OAA. This Rhodopseudomonas palustris (strain BisB5) protein is Phosphoenolpyruvate carboxykinase (ATP).